Reading from the N-terminus, the 165-residue chain is Coatomer subunit zeta (165 aa).

The protein belongs to the adaptor complexes small subunit family. In terms of assembly, oligomeric complex that consists of at least the alpha, beta, beta', gamma, delta, epsilon and zeta subunits.

The protein resides in the cytoplasm. It is found in the golgi apparatus membrane. The protein localises to the cytoplasmic vesicle. Its subcellular location is the COPI-coated vesicle membrane. The coatomer is a cytosolic protein complex that binds to dilysine motifs and reversibly associates with Golgi non-clathrin-coated vesicles, which further mediate biosynthetic protein transport from the ER, via the Golgi up to the trans Golgi network. Coatomer complex is required for budding from Golgi membranes, and is essential for the retrograde Golgi-to-ER transport of dilysine-tagged proteins. The zeta subunit may be involved in regulating the coat assembly and, hence, the rate of biosynthetic protein transport due to its association-dissociation properties with the coatomer complex. This is Coatomer subunit zeta from Encephalitozoon cuniculi (strain GB-M1) (Microsporidian parasite).